The primary structure comprises 221 residues: Kinetochore protein Spc25 (221 aa).

The stretch at 63–114 (VIQRREEMEKRVSFMEELAQEVEATKQRNLVMREQIKQQKMLVRQRKNEIME) forms a coiled coil.

This sequence belongs to the SPC25 family. As to quaternary structure, component of the Ndc80 complex, which is composed of Ndc80, Nuf2 and Spc25.

The protein resides in the nucleus. It is found in the chromosome. Its subcellular location is the centromere. The protein localises to the kinetochore. In terms of biological role, acts as a component of the essential kinetochore-associated Ndc80 complex, which is required for chromosome segregation and spindle checkpoint activity during meiosis and mitosis. Required for kinetochore integrity and the organization of stable microtubule binding sites in the outer plate of the kinetochore. Participates in SAC signaling that responds specifically to disruptions in spindle microtubule dynamics. The NDC80 complex synergistically enhances the affinity of the SKA1 complex for microtubules and may allow the NDC80 complex to track depolymerizing microtubules. The protein is Kinetochore protein Spc25 of Drosophila eugracilis (Fruit fly).